We begin with the raw amino-acid sequence, 344 residues long: UDP-3-O-acylglucosamine N-acyltransferase (344 aa).

The active-site Proton acceptor is H244.

Belongs to the transferase hexapeptide repeat family. LpxD subfamily. Homotrimer.

The catalysed reaction is a UDP-3-O-[(3R)-3-hydroxyacyl]-alpha-D-glucosamine + a (3R)-hydroxyacyl-[ACP] = a UDP-2-N,3-O-bis[(3R)-3-hydroxyacyl]-alpha-D-glucosamine + holo-[ACP] + H(+). It functions in the pathway bacterial outer membrane biogenesis; LPS lipid A biosynthesis. In terms of biological role, catalyzes the N-acylation of UDP-3-O-acylglucosamine using 3-hydroxyacyl-ACP as the acyl donor. Is involved in the biosynthesis of lipid A, a phosphorylated glycolipid that anchors the lipopolysaccharide to the outer membrane of the cell. This chain is UDP-3-O-acylglucosamine N-acyltransferase, found in Pseudoalteromonas atlantica (strain T6c / ATCC BAA-1087).